Here is a 485-residue protein sequence, read N- to C-terminus: Lysine--tRNA ligase (485 aa).

Mg(2+)-binding residues include Glu391 and Glu398.

This sequence belongs to the class-II aminoacyl-tRNA synthetase family. Homodimer. Requires Mg(2+) as cofactor.

Its subcellular location is the cytoplasm. The catalysed reaction is tRNA(Lys) + L-lysine + ATP = L-lysyl-tRNA(Lys) + AMP + diphosphate. The protein is Lysine--tRNA ligase of Blochmanniella floridana.